The primary structure comprises 253 residues: Ribulose bisphosphate carboxylase large chain (253 aa).

Residues Asn35 and Thr85 each coordinate substrate. Lys87 serves as the catalytic Proton acceptor. Lys89 is a binding site for substrate. Residues Lys113, Asp115, and Glu116 each coordinate Mg(2+). Lys113 carries the post-translational modification N6-carboxylysine. The Proton acceptor role is filled by His206. Arg207 and His239 together coordinate substrate.

It belongs to the RuBisCO large chain family. Type I subfamily. As to quaternary structure, heterohexadecamer of 8 large chains and 8 small chains; disulfide-linked. The disulfide link is formed within the large subunit homodimers. Mg(2+) is required as a cofactor. In terms of processing, the disulfide bond which can form in the large chain dimeric partners within the hexadecamer appears to be associated with oxidative stress and protein turnover.

It is found in the plastid. The protein localises to the chloroplast. The catalysed reaction is 2 (2R)-3-phosphoglycerate + 2 H(+) = D-ribulose 1,5-bisphosphate + CO2 + H2O. It carries out the reaction D-ribulose 1,5-bisphosphate + O2 = 2-phosphoglycolate + (2R)-3-phosphoglycerate + 2 H(+). Its function is as follows. RuBisCO catalyzes two reactions: the carboxylation of D-ribulose 1,5-bisphosphate, the primary event in carbon dioxide fixation, as well as the oxidative fragmentation of the pentose substrate in the photorespiration process. Both reactions occur simultaneously and in competition at the same active site. This Magnolia latahensis (Apocynophyllum latahense) protein is Ribulose bisphosphate carboxylase large chain (rbcL).